Consider the following 405-residue polypeptide: MNLALNLLHKRGFLKQCTSLKVLSDLMDREKIVFYAGVDATSSSLHIGHLIPFLAMMHLRQHGHIPIVLIGDSTTKIGDPSGKSEMRKILSLEEISNNAFSIKNQLQRITKFSSKCFIHNSNWLDNLNYIEFLRDIGIHFSVNRMLSFETYKKRLDFGLSFIEFNYQLLQSYDYYMLNKIRNCRLQIGGDDQWGNIISGIDLIRKKAGVETFGLTFPLITRSDGKKMGKSEKGAVYLDSSLYSIYDFYQYFRNTSDSDVKTFLYLFTFLEEDEIELISNFKGNSLNKAKEILAFEITKIVHGEAEALKVQEASFAAFRGSGDRSNIPFFKFSFSNLEEEVLLINLMLDSKIVPSKSEGRRLIDSGGVYINGKRVENQNHCLTRKDFNNNEIELRVGKKKFLRIVL.

L-tyrosine is bound at residue Y35. The short motif at 40–49 (ATSSSLHIGH) is the 'HIGH' region element. 2 residues coordinate L-tyrosine: Y166 and Q170. The 'KMSKS' region signature appears at 226–230 (KMGKS). K229 is a binding site for ATP. One can recognise an S4 RNA-binding domain in the interval 340–404 (VLLINLMLDS…VGKKKFLRIV (65 aa)).

The protein belongs to the class-I aminoacyl-tRNA synthetase family. TyrS type 1 subfamily. In terms of assembly, homodimer.

The protein localises to the cytoplasm. It carries out the reaction tRNA(Tyr) + L-tyrosine + ATP = L-tyrosyl-tRNA(Tyr) + AMP + diphosphate + H(+). In terms of biological role, catalyzes the attachment of tyrosine to tRNA(Tyr) in a two-step reaction: tyrosine is first activated by ATP to form Tyr-AMP and then transferred to the acceptor end of tRNA(Tyr). In Borreliella afzelii (strain PKo) (Borrelia afzelii), this protein is Tyrosine--tRNA ligase.